The following is a 295-amino-acid chain: Protease HtpX homolog (295 aa).

A run of 2 helical transmembrane segments spans residues 6–26 (IGLF…VTSV) and 40–60 (LSSL…VSLL). H148 is a binding site for Zn(2+). E149 is an active-site residue. Residue H152 participates in Zn(2+) binding. Helical transmembrane passes span 163-183 (LIQG…SYAL) and 198-218 (IANI…VAYF). E223 is a binding site for Zn(2+).

The protein belongs to the peptidase M48B family. The cofactor is Zn(2+).

It localises to the cell inner membrane. The chain is Protease HtpX homolog from Leptospira interrogans serogroup Icterohaemorrhagiae serovar copenhageni (strain Fiocruz L1-130).